The chain runs to 287 residues: Glycine--tRNA ligase alpha subunit (287 aa).

Belongs to the class-II aminoacyl-tRNA synthetase family. In terms of assembly, tetramer of two alpha and two beta subunits.

It localises to the cytoplasm. It carries out the reaction tRNA(Gly) + glycine + ATP = glycyl-tRNA(Gly) + AMP + diphosphate. This chain is Glycine--tRNA ligase alpha subunit, found in Campylobacter jejuni subsp. doylei (strain ATCC BAA-1458 / RM4099 / 269.97).